Consider the following 258-residue polypeptide: Methionine aminopeptidase (258 aa).

His84 is a binding site for substrate. Residues Asp102, Asp113, and His176 each coordinate a divalent metal cation. His183 lines the substrate pocket. Glu211 and Glu242 together coordinate a divalent metal cation.

This sequence belongs to the peptidase M24A family. Methionine aminopeptidase type 1 subfamily. Monomer. It depends on Co(2+) as a cofactor. Zn(2+) is required as a cofactor. The cofactor is Mn(2+). Fe(2+) serves as cofactor.

It carries out the reaction Release of N-terminal amino acids, preferentially methionine, from peptides and arylamides.. Its function is as follows. Removes the N-terminal methionine from nascent proteins. The N-terminal methionine is often cleaved when the second residue in the primary sequence is small and uncharged (Met-Ala-, Cys, Gly, Pro, Ser, Thr, or Val). Requires deformylation of the N(alpha)-formylated initiator methionine before it can be hydrolyzed. This is Methionine aminopeptidase from Aquifex aeolicus (strain VF5).